Reading from the N-terminus, the 315-residue chain is Ribosomal RNA small subunit methyltransferase H (315 aa).

Residues glycine 35–histidine 37, aspartate 55, phenylalanine 80, aspartate 102, and glutamine 109 contribute to the S-adenosyl-L-methionine site.

Belongs to the methyltransferase superfamily. RsmH family.

It is found in the cytoplasm. The enzyme catalyses cytidine(1402) in 16S rRNA + S-adenosyl-L-methionine = N(4)-methylcytidine(1402) in 16S rRNA + S-adenosyl-L-homocysteine + H(+). Its function is as follows. Specifically methylates the N4 position of cytidine in position 1402 (C1402) of 16S rRNA. This Shewanella halifaxensis (strain HAW-EB4) protein is Ribosomal RNA small subunit methyltransferase H.